The sequence spans 354 residues: MDYGYFFPAQRIEETNGVDFWIDSNAEFTQSKRPDSSTSTLSRVLTDTTNVSNNSGSLKRKTIKNKIFPQRKIFNDSENFDFGKANTDCKHVFKSISKQLIFLPRCFQHHSIRGWMKDRYSEFGYKIKRNQNCPPSACVQALYNTSRSNTEESNPNSLDSLIMYKYMRYSEKKKELMCRFCQGNNWILAENYLKHLFFAHGILSEFKPHTLYHFESKLLKIQGKLNFKIQVLKEPEFSKKILNSLTVSIIPSPLAYYTQTLNGGFRRIHVKCPHCENWIRLGWCEYDEIIRDSFQDFESLRNLNADYNGMSYIQTRNREDIEGIYENYFTHYIQCDLATFRTKCLYVQVITKSN.

Functionally, may be involved in cell wall organization and biogenesis. The polypeptide is Protein ECM8 (ECM8) (Saccharomyces cerevisiae (strain ATCC 204508 / S288c) (Baker's yeast)).